A 332-amino-acid chain; its full sequence is Glycerol-3-phosphate dehydrogenase [NAD(P)+] (332 aa).

Ser15, Trp16, and Lys110 together coordinate NADPH. Lys110, Gly137, and Ser139 together coordinate sn-glycerol 3-phosphate. Ala141 serves as a coordination point for NADPH. Sn-glycerol 3-phosphate-binding residues include Lys192, Asp245, Ser255, Arg256, and Asn257. Lys192 acts as the Proton acceptor in catalysis. Residue Arg256 coordinates NADPH. Glu282 contacts NADPH.

This sequence belongs to the NAD-dependent glycerol-3-phosphate dehydrogenase family.

It localises to the cytoplasm. It carries out the reaction sn-glycerol 3-phosphate + NAD(+) = dihydroxyacetone phosphate + NADH + H(+). The catalysed reaction is sn-glycerol 3-phosphate + NADP(+) = dihydroxyacetone phosphate + NADPH + H(+). Its pathway is membrane lipid metabolism; glycerophospholipid metabolism. Catalyzes the reduction of the glycolytic intermediate dihydroxyacetone phosphate (DHAP) to sn-glycerol 3-phosphate (G3P), the key precursor for phospholipid synthesis. The chain is Glycerol-3-phosphate dehydrogenase [NAD(P)+] from Coxiella burnetii (strain RSA 331 / Henzerling II).